The primary structure comprises 605 residues: MASQLSYLQRELLQALLESGVTKEALKKALADGDDYTYPNVPLDDIRNLDEGENCVQLPNGLGESHISEDESSDDGEDFTPPIMKELERLSPEEAAHQKAVVERLLQEDSWHVAKLVKSYLQQHNIPQREVVETTGLNQSHLSQHLNKGTPMKTQKRAALYTWYVGKQREIARLFTFTEFTHAGQGLITDDMSCDEVPTKKMRRNRFKWGPASQQILFQAYERQKNPSKEEREALVEECNRAECLQRGVSPSQAQGLGSNLVTEVRVYNWFANRRKEEAFRHKLAMDTYNGQQNSAPTLSAHDLPHGKTYGFRYIQDSSTDRSAVMANSQSTPSPSALEPSHSLMNSDSKMIPVSGGSLPPVSTLTALHNVDHSQHTLGQTQNLIMASLPSVMTIGTDTALGPAFSNPGSSTLVIGLASQTQSVPVINSVGSSLTTLQSVQFSQQLHPSHQLHPSHQQPIVQQVQSHMAQNPFMATMAQLQSPHAIYSHKPDVAQYASAGFFPQTMVITDTSNLGTLTSLTPSKQVVPLHTTAHGDAPGSQLQNQDSSILHLPLCHRLSPIPTVSSASLVHYHNSSSPENHSHLLSPSHNTIDSFISTQMASSSQ.

The interval 1–31 (MASQLSYLQRELLQALLESGVTKEALKKALA) is dimerization. In terms of domain architecture, HNF-p1 spans 1–32 (MASQLSYLQRELLQALLESGVTKEALKKALAD). Residues 57 to 81 (QLPNGLGESHISEDESSDDGEDFTP) form a disordered region. The POU-specific atypical domain occupies 85–180 (KELERLSPEE…IARLFTFTEF (96 aa)). 6 interaction with DNA regions span residues 128-130 (QRE), 141-147 (HLSQHLN), 153-156 (KTQK), 206-209 (RFKW), 266-268 (RVY), and 273-276 (NRRK). The Nuclear localization signal motif lies at 200–208 (KKMRRNRFK). A DNA-binding region (homeobox; HNF1-type) is located at residues 202–282 (MRRNRFKWGP…NRRKEEAFRH (81 aa)). Residues 321 to 335 (DRSAVMANSQSTPSP) are compositionally biased toward polar residues. The interval 321-343 (DRSAVMANSQSTPSPSALEPSHS) is disordered. The segment at 448 to 453 (PSHQLH) is not present in other members of the HNF1 family.

The protein belongs to the HNF1 homeobox family. As to quaternary structure, binds DNA as dimer. Forms a homodimer or heterodimer with HNF1-alpha-B. Potentially also form a heterodimer with HNF1-beta. Protein expressed in liver, stomach, small intestine, colon and kidney. Not expressed in spleen, lung, blood, heart muscle, skeletal muscle, testis and brain.

It localises to the nucleus. In terms of biological role, transcriptional activator that regulates the tissue specific expression of multiple genes, especially in pancreas and liver. Binds to the hepatocyte specific promoter element HP1. Binds to the inverted palindrome 5'-GTTAATNATTAAC-3'. The polypeptide is Hepatocyte nuclear factor 1-alpha-A (hnf1a-a) (Xenopus laevis (African clawed frog)).